We begin with the raw amino-acid sequence, 633 residues long: Mitochondrial Rho GTPase 1 (633 aa).

The Miro 1 domain maps to Met1–His170. The Cytoplasmic segment spans residues Met1–Lys603. GTP is bound by residues Gly10–Ser17, Asp59–Leu63, and Asn115–Asp118. EF-hand domains lie at Ala186–Lys221 and Glu306–Leu341. Ca(2+) contacts are provided by Asp199, Asp201, Asp203, Tyr205, Glu210, Asp319, Asp321, Asp323, and Glu330. A disordered region spans residues Asn398 to Gly418. The span at Thr408–Gly418 shows a compositional bias: basic residues. Residues Arg422–Glu588 enclose the Miro 2 domain. Residues Gly431 to Ser438, Glu467 to Gly471, and Leu537 to Asp540 each bind GTP. Residues Trp604 to Ile624 traverse the membrane as a helical; Anchor for type IV membrane protein segment. Residues Trp625–Thr633 lie on the Mitochondrial intermembrane side of the membrane.

The protein belongs to the mitochondrial Rho GTPase family.

Its subcellular location is the mitochondrion outer membrane. Mitochondrial GTPase involved in mitochondrial trafficking. Probably involved in control of anterograde transport of mitochondria and their subcellular distribution. In Aspergillus oryzae (strain ATCC 42149 / RIB 40) (Yellow koji mold), this protein is Mitochondrial Rho GTPase 1 (gem1).